The sequence spans 610 residues: Elongation factor 4 (610 aa).

Residues 12-194 (EKIRNFSIIA…QIVEKVPAPQ (183 aa)) enclose the tr-type G domain. GTP-binding positions include 24–29 (DHGKST) and 141–144 (NKID).

This sequence belongs to the TRAFAC class translation factor GTPase superfamily. Classic translation factor GTPase family. LepA subfamily.

The protein localises to the cell membrane. The enzyme catalyses GTP + H2O = GDP + phosphate + H(+). Its function is as follows. Required for accurate and efficient protein synthesis under certain stress conditions. May act as a fidelity factor of the translation reaction, by catalyzing a one-codon backward translocation of tRNAs on improperly translocated ribosomes. Back-translocation proceeds from a post-translocation (POST) complex to a pre-translocation (PRE) complex, thus giving elongation factor G a second chance to translocate the tRNAs correctly. Binds to ribosomes in a GTP-dependent manner. The protein is Elongation factor 4 of Streptococcus thermophilus (strain ATCC BAA-250 / LMG 18311).